A 46-amino-acid polypeptide reads, in one-letter code: Ligatoxin-B (46 aa).

Disulfide bonds link Cys3–Cys40, Cys4–Cys32, and Cys16–Cys26.

It belongs to the plant thionin (TC 1.C.44) family.

It is found in the secreted. Its function is as follows. Thionins are small plant proteins which are toxic to animal cells. They seem to exert their toxic effect at the level of the cell membrane. Their precise function is not known. This is Ligatoxin-B from Phoradendron liga (Argentine mistletoe).